A 457-amino-acid polypeptide reads, in one-letter code: Bifunctional protein GlmU (457 aa).

The tract at residues 1-229 (MYNCAIILAA…YEEIMGVNSR (229 aa)) is pyrophosphorylase. UDP-N-acetyl-alpha-D-glucosamine is bound by residues 8–11 (LAAG), Lys22, Gln73, and 78–79 (GT). Residue Asp103 participates in Mg(2+) binding. Positions 140, 155, 170, and 227 each coordinate UDP-N-acetyl-alpha-D-glucosamine. Residue Asn227 coordinates Mg(2+). The linker stretch occupies residues 230–250 (VQLSEAEIVMRKRINHKHMVN). Residues 251-457 (GVTFIDCEST…WLDKKGLLKK (207 aa)) form an N-acetyltransferase region. UDP-N-acetyl-alpha-D-glucosamine-binding residues include Arg332 and Lys350. His362 (proton acceptor) is an active-site residue. UDP-N-acetyl-alpha-D-glucosamine contacts are provided by Tyr365 and Asn376. Acetyl-CoA is bound by residues 385–386 (NY), Ala422, and Arg439.

The protein in the N-terminal section; belongs to the N-acetylglucosamine-1-phosphate uridyltransferase family. It in the C-terminal section; belongs to the transferase hexapeptide repeat family. Homotrimer. Requires Mg(2+) as cofactor.

Its subcellular location is the cytoplasm. The catalysed reaction is alpha-D-glucosamine 1-phosphate + acetyl-CoA = N-acetyl-alpha-D-glucosamine 1-phosphate + CoA + H(+). It catalyses the reaction N-acetyl-alpha-D-glucosamine 1-phosphate + UTP + H(+) = UDP-N-acetyl-alpha-D-glucosamine + diphosphate. The protein operates within nucleotide-sugar biosynthesis; UDP-N-acetyl-alpha-D-glucosamine biosynthesis; N-acetyl-alpha-D-glucosamine 1-phosphate from alpha-D-glucosamine 6-phosphate (route II): step 2/2. It participates in nucleotide-sugar biosynthesis; UDP-N-acetyl-alpha-D-glucosamine biosynthesis; UDP-N-acetyl-alpha-D-glucosamine from N-acetyl-alpha-D-glucosamine 1-phosphate: step 1/1. It functions in the pathway bacterial outer membrane biogenesis; LPS lipid A biosynthesis. Functionally, catalyzes the last two sequential reactions in the de novo biosynthetic pathway for UDP-N-acetylglucosamine (UDP-GlcNAc). The C-terminal domain catalyzes the transfer of acetyl group from acetyl coenzyme A to glucosamine-1-phosphate (GlcN-1-P) to produce N-acetylglucosamine-1-phosphate (GlcNAc-1-P), which is converted into UDP-GlcNAc by the transfer of uridine 5-monophosphate (from uridine 5-triphosphate), a reaction catalyzed by the N-terminal domain. The chain is Bifunctional protein GlmU from Clostridium botulinum (strain 657 / Type Ba4).